We begin with the raw amino-acid sequence, 66 residues long: uncharacterized protein (66 aa).

This is an uncharacterized protein from Saccharomyces cerevisiae (strain ATCC 204508 / S288c) (Baker's yeast).